The sequence spans 379 residues: Zinc metalloproteinase nas-20 (379 aa).

A signal peptide spans 1 to 20 (MKITVNFLLVALIGVPSVLS). The propeptide occupies 21 to 29 (DRHITRDKR). The 179-residue stretch at 30–208 (QAMRDYAKWE…VLLNKFYGCN (179 aa)) folds into the Peptidase M12A domain. N-linked (GlcNAc...) asparagine glycosylation occurs at Asn-67. Disulfide bonds link Cys-70–Cys-207, Cys-91–Cys-111, Cys-209–Cys-229, and Cys-234–Cys-243. His-119 is a Zn(2+) binding site. The active site involves Glu-120. Residues His-123 and His-129 each contribute to the Zn(2+) site. Residue Asn-185 is glycosylated (N-linked (GlcNAc...) asparagine). Positions 203 to 244 (KFYGCNCDNHPRKLDCKNGGYQNPANCEECLCTDGFNGQLCD) constitute an EGF-like domain. N-linked (GlcNAc...) asparagine glycosylation is found at Asn-337 and Asn-370.

Zn(2+) is required as a cofactor.

It localises to the secreted. Metalloprotease. The chain is Zinc metalloproteinase nas-20 (nas-20) from Caenorhabditis elegans.